The sequence spans 459 residues: uncharacterized protein (459 aa).

Position 285 is an N6-(pyridoxal phosphate)lysine (Lys285).

The protein belongs to the class-III pyridoxal-phosphate-dependent aminotransferase family.

It is found in the cytoplasm. This is an uncharacterized protein from Schizosaccharomyces pombe (strain 972 / ATCC 24843) (Fission yeast).